Consider the following 174-residue polypeptide: Disulfide bond formation protein B (174 aa).

The Cytoplasmic segment spans residues Met1 to Ile12. Residues Leu13–Tyr29 form a helical membrane-spanning segment. At Leu30–Tyr47 the chain is on the periplasmic side. Cys39 and Cys42 are disulfide-bonded. A helical membrane pass occupies residues Ala48–Gln64. Residues Lys65–Met69 lie on the Cytoplasmic side of the membrane. The helical transmembrane segment at Thr70–Ala87 threads the bilayer. Residues Arg88–Asn143 are Periplasmic-facing. Cys102 and Cys129 are joined by a disulfide. A helical membrane pass occupies residues Trp144–Arg162. The Cytoplasmic portion of the chain corresponds to Gly163–Ala174.

This sequence belongs to the DsbB family.

Its subcellular location is the cell inner membrane. Its function is as follows. Required for disulfide bond formation in some periplasmic proteins. Acts by oxidizing the DsbA protein. In Acidovorax sp. (strain JS42), this protein is Disulfide bond formation protein B.